We begin with the raw amino-acid sequence, 360 residues long: MLVWLAEYLVKYHTFFNVFSYLTFRAIVGLLTALIIALWMGPHLIAWLQKMQIGQVVRNEGPESHFSKRGTPTMGGIMILFSIAVSTLLWARLDNPYVWCVLLVLIGYGIIGFIDDYRKVVRKDTRGLIARWKYFWQSVLALAVAFSMYAIGKDTPATQLVVPFFKDVMPQLGMLYILLAYFVIVGTSNAVNLTDGLDGLAIMPTVFVAAGFALVAWATGNVNFASYLKIPYLMHAGELVIVCTAIVGAGLGFLWFNTYPAQVFMGDVGSLALGGALGTIAVLLRQEFLLVIMGGVFVVETLSVILQVGSFKLRGQRIFRMAPIHHHYELKGWPEPRVIVRFWIISLMLVLIGLATLKVR.

A run of 10 helical transmembrane segments spans residues 27–47 (IVGL…LIAW), 71–91 (TPTM…LLWA), 97–117 (YVWC…IDDY), 132–152 (WKYF…YAIG), 168–188 (VMPQ…VGTS), 199–219 (GLAI…AWAT), 236–256 (AGEL…FLWF), 263–283 (VFMG…IAVL), 288–308 (FLLV…ILQV), and 338–358 (VIVR…ATLK).

It belongs to the glycosyltransferase 4 family. MraY subfamily. Mg(2+) serves as cofactor.

The protein resides in the cell inner membrane. The catalysed reaction is UDP-N-acetyl-alpha-D-muramoyl-L-alanyl-gamma-D-glutamyl-meso-2,6-diaminopimeloyl-D-alanyl-D-alanine + di-trans,octa-cis-undecaprenyl phosphate = di-trans,octa-cis-undecaprenyl diphospho-N-acetyl-alpha-D-muramoyl-L-alanyl-D-glutamyl-meso-2,6-diaminopimeloyl-D-alanyl-D-alanine + UMP. It participates in cell wall biogenesis; peptidoglycan biosynthesis. In terms of biological role, catalyzes the initial step of the lipid cycle reactions in the biosynthesis of the cell wall peptidoglycan: transfers peptidoglycan precursor phospho-MurNAc-pentapeptide from UDP-MurNAc-pentapeptide onto the lipid carrier undecaprenyl phosphate, yielding undecaprenyl-pyrophosphoryl-MurNAc-pentapeptide, known as lipid I. The chain is Phospho-N-acetylmuramoyl-pentapeptide-transferase from Proteus mirabilis (strain HI4320).